Consider the following 119-residue polypeptide: Phenol 2-monooxygenase, oxygenase component DmpO (119 aa).

The multicomponent enzyme phenol hydroxylase is formed by DmpL (P1 component), DmpM (P2 component), DmpN (P3 component), DmpO (P4 component) and DmpP (P5 component). The oxygenase component is a dimer composed of three subunits, DmpL, DmpN and DmpO (DmpLNO).

It catalyses the reaction phenol + NADH + O2 + H(+) = catechol + NAD(+) + H2O. It participates in aromatic compound metabolism; phenol degradation. With respect to regulation, requires DmpM for efficient turnover. The activity of DmpLNO oxygenase is inhibited by dithiothreitol (DTT) by a mechanism apparently involving H(2)O(2) generation. Its function is as follows. Part of a multicomponent enzyme which catalyzes the degradation of phenol and some of its methylated derivatives. DmpL, DmpN and DmpO form the oxygenase component of the complex. Required for growth on phenol and for in vitro phenol hydroxylase activity. The chain is Phenol 2-monooxygenase, oxygenase component DmpO from Pseudomonas sp. (strain CF600).